Reading from the N-terminus, the 497-residue chain is tRNA (adenine(58)-N(1))-methyltransferase non-catalytic subunit TRM6 (497 aa).

Disordered stretches follow at residues 1-20 and 69-100; these read MEGS…DHRI and TSGG…IVDD. A compositionally biased stretch (basic and acidic residues) spans 79–100; that stretch reads KREEPTAETKEAGTDNRNIVDD. 94 to 104 lines the substrate pocket; it reads NRNIVDDGKSQ. Threonine 107 is subject to Phosphothreonine. Substrate-binding positions include 145–154 and 175–182; these read KYIKKKKKKY and REPGKINH. The disordered stretch occupies residues 276–354; that stretch reads SSEPKDSALV…EKQRRQEEQR (79 aa). Serine 298 and serine 305 each carry phosphoserine. Positions 327–354 are enriched in basic and acidic residues; it reads DPEHKGPKERGSKKDYIQEKQRRQEEQR. Substrate is bound by residues arginine 349, arginine 377, 415–423, and 434–441; these read RERGGVINL and QVLPDRSH. Residues 472-497 are disordered; the sequence is SNASTLESHETEEPAAKKRKCPESDS. The span at 478 to 497 shows a compositional bias: basic and acidic residues; it reads ESHETEEPAAKKRKCPESDS.

Belongs to the TRM6/GCD10 family. As to quaternary structure, heterotetramer; composed of two copies of TRMT6 and two copies of TRMT61A. In terms of tissue distribution, expressed in brain, liver, testis and ovary.

It localises to the nucleus. Substrate-binding subunit of tRNA (adenine-N(1)-)-methyltransferase, which catalyzes the formation of N(1)-methyladenine at position 58 (m1A58) in initiator methionyl-tRNA. Together with the TRMT61A catalytic subunit, part of a mRNA N(1)-methyltransferase complex that mediates methylation of adenosine residues at the N(1) position of a small subset of mRNAs: N(1) methylation takes place in tRNA T-loop-like structures of mRNAs and is only present at low stoichiometries. The chain is tRNA (adenine(58)-N(1))-methyltransferase non-catalytic subunit TRM6 (TRMT6) from Homo sapiens (Human).